Here is a 506-residue protein sequence, read N- to C-terminus: U3 small nucleolar RNA-associated protein 18 homolog (506 aa).

A compositionally biased stretch (acidic residues) spans 1 to 11 (MSSDESSDGLE). Disordered regions lie at residues 1-44 (MSSD…SQAK) and 69-126 (AKSV…PLNH). The span at 24 to 37 (EQEKPAKIKRERYI) shows a compositional bias: basic and acidic residues. Residues Ser-102, Ser-104, Ser-164, and Ser-165 each carry the phosphoserine modification. 4 WD repeats span residues 203-242 (YAEG…NERL), 331-370 (KQEG…IEHI), 372-413 (MDDG…ASKA), and 469-505 (EKVG…YFKG).

The protein belongs to the WD repeat UTP18 family. As to quaternary structure, component of U3 snoRNP complex.

It is found in the nucleus. It localises to the nucleolus. Functionally, component of a nucleolar small nuclear ribonucleoprotein particle (snoRNP) thought to participate in the processing and modification of pre-ribosomal RNA. Regulation of cell size by ribosome synthesis is an important parameter for stem cell maintenance and function. In Drosophila melanogaster (Fruit fly), this protein is U3 small nucleolar RNA-associated protein 18 homolog (wcd).